The sequence spans 631 residues: Mitochondrial Rho GTPase (631 aa).

Over M1–F605 the chain is Cytoplasmic. The Miro 1 domain occupies K15 to H181. R27, G29, K30, T31, and S32 together coordinate GTP. T31 is a Mg(2+) binding site. D70 contributes to the Mg(2+) binding site. Position 72 (S72) interacts with GTP. An N6-acetyllysine modification is found at K105. 5 residues coordinate GTP: N131, K132, D134, A162, and K163. K166 participates in a covalent cross-link: Glycyl lysine isopeptide (Lys-Gly) (interchain with G-Cter in ubiquitin). The 36-residue stretch at A197–T232 folds into the EF-hand 1 domain. Residues D210, D212, D214, T216, and E221 each contribute to the Ca(2+) site. K248 is covalently cross-linked (Glycyl lysine isopeptide (Lys-Gly) (interchain with G-Cter in ubiquitin)). The 36-residue stretch at H317–I352 folds into the EF-hand 2 domain. D330, D332, D334, A336, and E341 together coordinate Ca(2+). Residues R429 to Y592 form the Miro 2 domain. G441, C442, G443, K444, T445, G446, K460, K541, D543, T571, and C572 together coordinate GTP. A Mg(2+)-binding site is contributed by G441. K585 is covalently cross-linked (Glycyl lysine isopeptide (Lys-Gly) (interchain with G-Cter in ubiquitin)). A helical; Anchor for type IV membrane protein membrane pass occupies residues W606–L628. Residues K629 to R631 are Mitochondrial intermembrane-facing.

It belongs to the mitochondrial Rho GTPase family. In terms of assembly, homodimer. Interacts with the kinesin-binding proteins TRAK1/OIP106 and TRAK2/GRIF1, forming a link between mitochondria and the trafficking apparatus of the microtubules. Interacts with RAP1GDS1. Interacts with ARMCX1. Found in a complex with KIF5B, OGT, RHOT2 and TRAK1. Ubiquitinated by PRKN during mitophagy, leading to its degradation and enhancement of mitophagy. Deubiquitinated by USP30. Post-translationally, acetylation on Lys-105 decreases sensitivity of mitochondrial transport to elevated Ca(2+) levels, increases mitochondrial transport and promotes axon growth. Deacetylated by HDAC6 which blocks mitochondrial transport and mediates axon growth inhibition.

It localises to the mitochondrion outer membrane. The catalysed reaction is GTP + H2O = GDP + phosphate + H(+). It catalyses the reaction ATP + H2O = ADP + phosphate + H(+). It carries out the reaction UTP + H2O = UDP + phosphate + H(+). In terms of biological role, atypical mitochondrial nucleoside-triphosphatase (NTPase) involved in mitochondrial trafficking. Probably involved in control of anterograde transport of mitochondria and their subcellular distribution. Promotes mitochondrial fission during high calcium conditions. Can hydrolyze GTP, ATP and UTP. The protein is Mitochondrial Rho GTPase of Rattus norvegicus (Rat).